The sequence spans 392 residues: Multidrug resistance protein MdtL (392 aa).

A run of 12 helical transmembrane segments spans residues 4 to 24 (FLLCSFALVLLYPSGIDMYLV), 38 to 58 (AQLHIAFSVYLAGMASAMLFA), 70 to 90 (VAIVGAVIFVVASLLCAQAHA), 95 to 115 (LVGRFIQGIGAGSCYVVAFAI), 131 to 151 (LLNGITCIIPVLAPVLGHLIM), 158 to 178 (SLFYTMTGMGVMVGLLSVFIL), 209 to 229 (ILITTLSVTAILTYVNVSPVL), 246 to 266 (ALMAMISMAVSFSTPFALSLF), 270 to 290 (TLMLTSQVLFLAAGLALSLAT), 294 to 314 (LTLIGLGMICAGFSVGFGVAM), 331 to 351 (VLGIAQVCGSSLWIWLAAIIG), and 357 to 377 (MLIGILIACSIVSLVLLLVVT).

The protein belongs to the major facilitator superfamily. DHA1 family. MdtL (TC 2.A.1.2.22) subfamily.

The protein resides in the cell inner membrane. The protein is Multidrug resistance protein MdtL of Klebsiella pneumoniae (strain 342).